We begin with the raw amino-acid sequence, 306 residues long: Agmatinase (306 aa).

The Mn(2+) site is built by H126, D149, H151, D153, D230, and D232.

It belongs to the arginase family. Agmatinase subfamily. It depends on Mn(2+) as a cofactor.

The enzyme catalyses agmatine + H2O = urea + putrescine. It participates in amine and polyamine biosynthesis; putrescine biosynthesis via agmatine pathway; putrescine from agmatine: step 1/1. Catalyzes the formation of putrescine from agmatine. The chain is Agmatinase from Shigella dysenteriae serotype 1 (strain Sd197).